We begin with the raw amino-acid sequence, 634 residues long: Biosynthetic arginine decarboxylase (634 aa).

Lys-103 is modified (N6-(pyridoxal phosphate)lysine). 283–293 (FDVGGGLGVDY) is a binding site for substrate.

Belongs to the Orn/Lys/Arg decarboxylase class-II family. SpeA subfamily. Requires Mg(2+) as cofactor. Pyridoxal 5'-phosphate serves as cofactor.

It catalyses the reaction L-arginine + H(+) = agmatine + CO2. It participates in amine and polyamine biosynthesis; agmatine biosynthesis; agmatine from L-arginine: step 1/1. Catalyzes the biosynthesis of agmatine from arginine. The polypeptide is Biosynthetic arginine decarboxylase (Photorhabdus laumondii subsp. laumondii (strain DSM 15139 / CIP 105565 / TT01) (Photorhabdus luminescens subsp. laumondii)).